The chain runs to 440 residues: Xylose isomerase (440 aa).

Residues histidine 100 and aspartate 103 contribute to the active site. Residues glutamate 231, glutamate 267, histidine 270, aspartate 295, aspartate 306, aspartate 308, and aspartate 338 each coordinate Mg(2+).

Belongs to the xylose isomerase family. In terms of assembly, homotetramer. Mg(2+) is required as a cofactor.

It localises to the cytoplasm. It catalyses the reaction alpha-D-xylose = alpha-D-xylulofuranose. The protein is Xylose isomerase of Burkholderia vietnamiensis (strain G4 / LMG 22486) (Burkholderia cepacia (strain R1808)).